The chain runs to 490 residues: Sushi domain-containing protein 4 (490 aa).

The disordered stretch occupies residues 1-21 (MYHGMNPSNGDGFLEQQQQQQ). Positions 1–41 (MYHGMNPSNGDGFLEQQQQQQQPQSPQRLLAVILWFQLALC) are cleaved as a signal peptide. The Extracellular portion of the chain corresponds to 42–319 (FGPAQLTGGF…PSTHETLLTT (278 aa)). Sushi domains are found at residues 55–119 (QVCA…ICVQ), 120–179 (EDCR…ICQG), 178–239 (QGCL…RCLA), and 241–304 (EVCP…YCIK). 8 cysteine pairs are disulfide-bonded: C57-C99, C85-C117, C122-C165, C147-C177, C180-C224, C210-C237, C243-C289, and C274-C302. N-linked (GlcNAc...) asparagine glycans are attached at residues N104 and N134. N192 is a glycosylation site (N-linked (GlcNAc...) asparagine). A helical transmembrane segment spans residues 320-340 (WKIVAFTATSVLLVLLLVILA). Topologically, residues 341–490 (RMFQTKFKAH…DEIPLMEEDP (150 aa)) are cytoplasmic. Residues 401 to 490 (GCPLPVDDQS…DEIPLMEEDP (90 aa)) are disordered. The span at 430-456 (CDSVSGSSELLQSLYSPPRCQESTHPA) shows a compositional bias: polar residues. Acidic residues predominate over residues 479-490 (IADEIPLMEEDP).

In terms of tissue distribution, isoform 3 is the predominant isoform in all tissues except cortex, cerebellum, kidney, and breast. Isoform 1 is found primarily in the esophagus and the brain.

The protein resides in the membrane. It localises to the secreted. Functionally, acts as a complement inhibitor by disrupting the formation of the classical C3 convertase. Isoform 3 inhibits the classical complement pathway, while membrane-bound isoform 1 inhibits deposition of C3b via both the classical and alternative complement pathways. The chain is Sushi domain-containing protein 4 (SUSD4) from Homo sapiens (Human).